The following is a 541-amino-acid chain: Myrosinase 1 (541 aa).

The N-terminal stretch at 1 to 19 (MKLLMLAFVFLLALATCKG) is a signal peptide. Intrachain disulfides connect Cys-24-Cys-449, Cys-32-Cys-445, and Cys-224-Cys-232. Asn-33 carries an N-linked (GlcNAc...) asparagine glycan. Gln-57 lines the a beta-D-glucoside pocket. Asn-108 carries an N-linked (GlcNAc...) asparagine glycan. Position 159 (His-159) interacts with a beta-D-glucoside. The N-linked (GlcNAc...) asparagine glycan is linked to Asn-175. 204–205 (NQ) is an a beta-D-glucoside binding site. Asn-236 carries N-linked (GlcNAc...) asparagine glycosylation. Tyr-348 is a binding site for a beta-D-glucoside. N-linked (GlcNAc...) asparagine glycans are attached at residues Asn-356 and Asn-379. A beta-D-glucoside is bound by residues Glu-420, Trp-468, 475–476 (EF), and Phe-484. The Nucleophile role is filled by Glu-420. Residues Asn-493 and Asn-512 are each glycosylated (N-linked (GlcNAc...) asparagine).

The protein belongs to the glycosyl hydrolase 1 family. In terms of assembly, homodimer. In terms of tissue distribution, expressed in guard cells, phloem-associated cells and myrosin cells.

The protein localises to the vacuole. It catalyses the reaction a thioglucoside + H2O = a sugar + a thiol.. The enzyme catalyses Hydrolysis of terminal, non-reducing beta-D-glucosyl residues with release of beta-D-glucose.. Its function is as follows. Degradation of glucosinolates (glucose residue linked by a thioglucoside bound to an amino acid derivative) to glucose, sulfate and any of the products: thiocyanates, isothiocyanates, nitriles, epithionitriles or oxazolidine-2-thiones. These toxic degradation products can deter insect herbivores. Seems to function in abscisic acid (ABA) and methyl jasmonate (MeJA) signaling in guard cells. Functionally redundant with TGG2. Hydrolyzes sinigrin and, with lower efficiency, p-nitrophenyl beta-D-glucoside. The sequence is that of Myrosinase 1 from Arabidopsis thaliana (Mouse-ear cress).